The sequence spans 123 residues: MKLLLLALPMLVLLPQVIPAYSGEKKCWNRSGHCRKQCKDGEAVKDTCKNLRACCVPSNEDHRRVPTTSPTPLSDSTPGIIDDILTVRFTTDYFEVSSKKDMIEESEAGRGTETSLPNVHHSS.

Residues 1–19 form the signal peptide; sequence MKLLLLALPMLVLLPQVIP. Cystine bridges form between Cys27/Cys54, Cys34/Cys48, and Cys38/Cys55. Residues 65–123 constitute a propeptide that is removed on maturation; it reads VPTTSPTPLSDSTPGIIDDILTVRFTTDYFEVSSKKDMIEESEAGRGTETSLPNVHHSS. Residues 100–110 are compositionally biased toward basic and acidic residues; it reads KDMIEESEAGR. The tract at residues 100–123 is disordered; that stretch reads KDMIEESEAGRGTETSLPNVHHSS. A compositionally biased stretch (polar residues) spans 112–123; the sequence is TETSLPNVHHSS.

The protein belongs to the beta-defensin family. In terms of processing, the three-dimensional structure formed by the three intramolecular disulfide bridges is indispensable for antimicrobial activity.

It localises to the secreted. Functionally, host defense peptide that exhibits antimicrobial activity against both Gram-negative bacteria, such as E.coli and S.typhimurium, and Gram-positive bacteria, such as S.aureus and B.subtilis. Inhibits cell adhesion of E.coli on intestinal epithelial enterocytes. Causes rapid permeabilization of both the outer and inner membrane of E.coli, leading to morphological alterations on the bacterial surface. Binds to bacterial lipopolysaccharides (LPS) with high affinity, and may thereby be involved in immunoregulation through LPS neutralization. May contribute to epididymal innate immunity and protect the sperm against attack by microorganisms. The sequence is that of Defensin beta 118 (DEFB118) from Gorilla gorilla gorilla (Western lowland gorilla).